A 72-amino-acid chain; its full sequence is MSKDDSIEFEGSVSETLPNTTFRVKLENGHEIIAHISGRMRKNYIRILTGDRVKVEMTPYDLTKGRITYRMK.

An S1-like domain is found at 1–72; the sequence is MSKDDSIEFE…TKGRITYRMK (72 aa).

It belongs to the IF-1 family. As to quaternary structure, component of the 30S ribosomal translation pre-initiation complex which assembles on the 30S ribosome in the order IF-2 and IF-3, IF-1 and N-formylmethionyl-tRNA(fMet); mRNA recruitment can occur at any time during PIC assembly.

It is found in the cytoplasm. One of the essential components for the initiation of protein synthesis. Stabilizes the binding of IF-2 and IF-3 on the 30S subunit to which N-formylmethionyl-tRNA(fMet) subsequently binds. Helps modulate mRNA selection, yielding the 30S pre-initiation complex (PIC). Upon addition of the 50S ribosomal subunit IF-1, IF-2 and IF-3 are released leaving the mature 70S translation initiation complex. This is Translation initiation factor IF-1 from Xanthomonas euvesicatoria pv. vesicatoria (strain 85-10) (Xanthomonas campestris pv. vesicatoria).